Here is a 480-residue protein sequence, read N- to C-terminus: Vacuolar amino acid transporter 2 (480 aa).

A disordered region spans residues 21–48 (LTNFPFPGTTDNDSDDGSQGQNSLNIIT). Positions 37 to 46 (GSQGQNSLNI) are enriched in polar residues. Transmembrane regions (helical) follow at residues 72 to 92 (AFMNLANSILGAGIITQPFAI), 95 to 115 (AGILGGLLSYVALGFIVDWTL), 145 to 165 (LILFTNGLFAFGGCIGYCIII), 214 to 234 (LSKASFLAVISMIIIVLTVVI), 263 to 283 (LSVISFALVCHHNTSFIFFSM), 297 to 317 (ISIIISVICCALMGYSGFAVF), 338 to 358 (IARLCFGFNMLTTFPMEIFVL), 394 to 414 (VFITMGISLTTCNLGALFELI), and 447 to 467 (FYLCICFGFMIMIISSTQTII).

It belongs to the amino acid/polyamine transporter 2 family.

The protein localises to the vacuole membrane. Probable amino acid transporter of unknown specificity. This Saccharomyces cerevisiae (strain ATCC 204508 / S288c) (Baker's yeast) protein is Vacuolar amino acid transporter 2 (AVT2).